The following is a 785-amino-acid chain: MGSDWDEIKRLAADFQKAQLTSTLQKLSERNCVEIVTLLLEKQLLEVVFTNDGKEYITPDHLEREIQDELYANGGRANLVEVSRTLNVDLSRIVALAERIAAENPLVHLVLGQLIDEDYISHIAQEINEKLALRGEISISDLASQFDLPSEFLQQDVVEKHLGKIIKGRQDATNPRVFFTQAYIQRCKAKIRGALAAITRPTNVAVILQQINVQEKIFHSLLDEISPAGQVTSKLANAQYVPHIYAKTQADWVNSFYKQNSFLEYDAINKLGISDAKSYIRKQFPNEEFLFLKRVALGARLVELTVVTALNECSATKQYLDLTTILPSNLSEEDIEEVFSAIMAQKHSNPSNFVYLDSIVFSQPYLTELVQPCHALAEAQAKAAIDSGVYQQFIVEKTLAQKGNASFQDQDDDGKLDKRDERRKKASSGKAGGGAQGRETKTKSTKKHQRRSAAAQNDSDVEDDVQHQGSRGAGGGGGNKKTVKPLDLVKTADIEKLINASLQEEGLEHLAPSIAALYLNQLNQAALAKAQELYEATPQTNRRQTHAAIQDRINTLLIDIRLYEKGLKLFSHDTQTQLVKYLLKSLGNDICNELSLYVASECNLTVKNTSLNVDQRIKLAQECDAEYRSALLEQNKALNKSIDDFELATESVLKACSMIIKKVDKKKDRLLIADHKNKLQQQLLDCQEPALLLHLAALILFTTISGCILHASGKFVSAILQHIRGSLSDPQNDMLLRYHDLVLQVLQTAPESDDSKMAHEQLQIMQSKVVELAQNYTRASVSKAD.

A disordered region spans residues 404 to 482 (NASFQDQDDD…AGGGGGNKKT (79 aa)).

Belongs to the UFL1 family.

E3 UFM1-protein ligase that mediates ufmylation of target proteins. The protein is E3 UFM1-protein ligase 1 homolog of Drosophila persimilis (Fruit fly).